The sequence spans 264 residues: MKIQTNAVNVLQRTSAYLKSGLLKETPAWYNVVASIPPSTKFTREPRFKNPSNGHIIGKLVDVTEQPHANNKGLYKTRPNSSDKRVGVKRLYRPPKLTYVEDRLRSLFYKQHPWELSRPKILVENEIGDENYDWSHMLQIGRPLDGESVIQRTMYLIKTKQYGDMVEAYDHARYEFYALRMQEETEQQVALEEAEMFGSLFGVSAIEHGIQKEQEVLDVWEKKVVEETELMAARTSNPAGSWKDDTTLNTAQEEESTTSENLHF.

The tract at residues 233-264 (ARTSNPAGSWKDDTTLNTAQEEESTTSENLHF) is disordered.

This sequence belongs to the mitochondrion-specific ribosomal protein mS23 family. In terms of assembly, component of the mitochondrial small ribosomal subunit. Mature mitochondrial ribosomes consist of a small (37S) and a large (54S) subunit. The 37S subunit contains at least 33 different proteins and 1 molecule of RNA (15S). The 54S subunit contains at least 45 different proteins and 1 molecule of RNA (21S).

The protein localises to the mitochondrion. The chain is Small ribosomal subunit protein mS23 (RSM25) from Saccharomyces cerevisiae (strain YJM789) (Baker's yeast).